The sequence spans 177 residues: 3-hydroxydecanoyl-[acyl-carrier-protein] dehydratase (177 aa).

The active site involves His-76.

The protein belongs to the thioester dehydratase family. FabA subfamily. In terms of assembly, homodimer.

The protein resides in the cytoplasm. The enzyme catalyses a (3R)-hydroxyacyl-[ACP] = a (2E)-enoyl-[ACP] + H2O. It carries out the reaction (3R)-hydroxydecanoyl-[ACP] = (2E)-decenoyl-[ACP] + H2O. It catalyses the reaction (2E)-decenoyl-[ACP] = (3Z)-decenoyl-[ACP]. It functions in the pathway lipid metabolism; fatty acid biosynthesis. Its function is as follows. Necessary for the introduction of cis unsaturation into fatty acids. Catalyzes the dehydration of (3R)-3-hydroxydecanoyl-ACP to E-(2)-decenoyl-ACP and then its isomerization to Z-(3)-decenoyl-ACP. Can catalyze the dehydratase reaction for beta-hydroxyacyl-ACPs with saturated chain lengths up to 16:0, being most active on intermediate chain length. This Mannheimia succiniciproducens (strain KCTC 0769BP / MBEL55E) protein is 3-hydroxydecanoyl-[acyl-carrier-protein] dehydratase.